Reading from the N-terminus, the 211-residue chain is ATP-dependent Clp protease proteolytic subunit (211 aa).

The active-site Nucleophile is S106. Residue H131 is part of the active site.

The protein belongs to the peptidase S14 family. Fourteen ClpP subunits assemble into 2 heptameric rings which stack back to back to give a disk-like structure with a central cavity, resembling the structure of eukaryotic proteasomes.

The protein localises to the cytoplasm. The enzyme catalyses Hydrolysis of proteins to small peptides in the presence of ATP and magnesium. alpha-casein is the usual test substrate. In the absence of ATP, only oligopeptides shorter than five residues are hydrolyzed (such as succinyl-Leu-Tyr-|-NHMec, and Leu-Tyr-Leu-|-Tyr-Trp, in which cleavage of the -Tyr-|-Leu- and -Tyr-|-Trp bonds also occurs).. In terms of biological role, cleaves peptides in various proteins in a process that requires ATP hydrolysis. Has a chymotrypsin-like activity. Plays a major role in the degradation of misfolded proteins. The protein is ATP-dependent Clp protease proteolytic subunit of Nitrobacter hamburgensis (strain DSM 10229 / NCIMB 13809 / X14).